A 227-amino-acid chain; its full sequence is NAD(P)H-quinone oxidoreductase subunit K, chloroplastic (227 aa).

[4Fe-4S] cluster contacts are provided by C43, C44, C108, and C139.

This sequence belongs to the complex I 20 kDa subunit family. As to quaternary structure, NDH is composed of at least 16 different subunits, 5 of which are encoded in the nucleus. [4Fe-4S] cluster serves as cofactor.

Its subcellular location is the plastid. It is found in the chloroplast thylakoid membrane. It catalyses the reaction a plastoquinone + NADH + (n+1) H(+)(in) = a plastoquinol + NAD(+) + n H(+)(out). The enzyme catalyses a plastoquinone + NADPH + (n+1) H(+)(in) = a plastoquinol + NADP(+) + n H(+)(out). In terms of biological role, NDH shuttles electrons from NAD(P)H:plastoquinone, via FMN and iron-sulfur (Fe-S) centers, to quinones in the photosynthetic chain and possibly in a chloroplast respiratory chain. It has NADH- and deamino-NADH-specific dehydrogenase activity, using ferricyanide or quinones as acceptors. The immediate electron acceptor for the enzyme in this species is believed to be plastoquinone. Couples the redox reaction to proton translocation, and thus conserves the redox energy in a proton gradient. The protein is NAD(P)H-quinone oxidoreductase subunit K, chloroplastic of Pisum sativum (Garden pea).